The chain runs to 151 residues: MTLRLDSLKSNKGARRRKLRKGRGIAAGQGASCGFGMRGQKSRSGRPTRPGFEGGQMPLYRRVPKLKHFPLVNPKHFTVLNVSALNDLKDGSTVNLDSLVKDGIVTSPKHPLKMLGNGELTAKKLTVQAAAFTSSALTKIEAAGGTCDILH.

A disordered region spans residues 1-57 (MTLRLDSLKSNKGARRRKLRKGRGIAAGQGASCGFGMRGQKSRSGRPTRPGFEGGQM). The segment covering 12 to 23 (KGARRRKLRKGR) has biased composition (basic residues). The segment covering 25 to 37 (IAAGQGASCGFGM) has biased composition (gly residues).

Belongs to the universal ribosomal protein uL15 family. Part of the 50S ribosomal subunit.

Functionally, binds to the 23S rRNA. This is Large ribosomal subunit protein uL15 from Synechococcus sp. (strain CC9605).